A 209-amino-acid polypeptide reads, in one-letter code: Translation initiation factor IF-3 (209 aa).

It belongs to the IF-3 family. Monomer.

It localises to the cytoplasm. Its function is as follows. IF-3 binds to the 30S ribosomal subunit and shifts the equilibrium between 70S ribosomes and their 50S and 30S subunits in favor of the free subunits, thus enhancing the availability of 30S subunits on which protein synthesis initiation begins. This chain is Translation initiation factor IF-3, found in Chlorobium phaeovibrioides (strain DSM 265 / 1930) (Prosthecochloris vibrioformis (strain DSM 265)).